Consider the following 42-residue polypeptide: Photosystem I reaction center subunit IX (42 aa).

Residues 7–27 form a helical membrane-spanning segment; sequence YLSVAPVLSTLWFGSLAGLLI.

It belongs to the PsaJ family.

Its subcellular location is the plastid. The protein resides in the chloroplast thylakoid membrane. May help in the organization of the PsaE and PsaF subunits. This chain is Photosystem I reaction center subunit IX, found in Lepidium virginicum (Virginia pepperweed).